The chain runs to 487 residues: uncharacterized protein (487 aa).

Residues 7–28 traverse the membrane as a helical segment; that stretch reads HVISIFETLGAYFINIFYNFLY. Residues Asn-73, Asn-83, and Asn-195 are each glycosylated (N-linked (GlcNAc...) asparagine; by host). Residues 196–235 adopt a coiled-coil conformation; sequence RSLLHQIEELTSEKKSLLADLSTLRKKYEKRQSEYRRLVQ. Residues 294–305 show a composition bias toward polar residues; the sequence is TSQELTSKSPNN. Residues 294-324 are disordered; that stretch reads TSQELTSKSPNNYPVPHSRTIVSKPSDNYPV. Asn-462 is a glycosylation site (N-linked (GlcNAc...) asparagine; by host).

It belongs to the asfivirus B475L family.

It is found in the host membrane. This is an uncharacterized protein from African swine fever virus (isolate Tick/South Africa/Pretoriuskop Pr4/1996) (ASFV).